Consider the following 329-residue polypeptide: Acetyl-coenzyme A carboxylase carboxyl transferase subunit alpha (329 aa).

The region spanning 40–294 (QLETLAARRR…KNALEKHLSE (255 aa)) is the CoA carboxyltransferase C-terminal domain.

Belongs to the AccA family. As to quaternary structure, acetyl-CoA carboxylase is a heterohexamer composed of biotin carboxyl carrier protein (AccB), biotin carboxylase (AccC) and two subunits each of ACCase subunit alpha (AccA) and ACCase subunit beta (AccD).

The protein localises to the cytoplasm. The catalysed reaction is N(6)-carboxybiotinyl-L-lysyl-[protein] + acetyl-CoA = N(6)-biotinyl-L-lysyl-[protein] + malonyl-CoA. The protein operates within lipid metabolism; malonyl-CoA biosynthesis; malonyl-CoA from acetyl-CoA: step 1/1. Its function is as follows. Component of the acetyl coenzyme A carboxylase (ACC) complex. First, biotin carboxylase catalyzes the carboxylation of biotin on its carrier protein (BCCP) and then the CO(2) group is transferred by the carboxyltransferase to acetyl-CoA to form malonyl-CoA. The polypeptide is Acetyl-coenzyme A carboxylase carboxyl transferase subunit alpha (Prochlorococcus marinus (strain NATL2A)).